The sequence spans 400 residues: Bifunctional enzyme IspD/IspF (400 aa).

The segment at 1 to 244 (MSHRVLGTER…LLKERDKMDI (244 aa)) is 2-C-methyl-D-erythritol 4-phosphate cytidylyltransferase. Residues 245-400 (RTGNGYDVHR…ALATVTLVRT (156 aa)) form a 2-C-methyl-D-erythritol 2,4-cyclodiphosphate synthase region. A divalent metal cation is bound by residues Asp251 and His253. 4-CDP-2-C-methyl-D-erythritol 2-phosphate is bound by residues 251 to 253 (DVH) and 277 to 278 (HS). His285 contacts a divalent metal cation. 4-CDP-2-C-methyl-D-erythritol 2-phosphate is bound by residues 299-301 (DIG), 375-378 (TTSE), Phe382, and Arg385.

The protein in the N-terminal section; belongs to the IspD/TarI cytidylyltransferase family. IspD subfamily. This sequence in the C-terminal section; belongs to the IspF family. Requires a divalent metal cation as cofactor.

It catalyses the reaction 2-C-methyl-D-erythritol 4-phosphate + CTP + H(+) = 4-CDP-2-C-methyl-D-erythritol + diphosphate. The enzyme catalyses 4-CDP-2-C-methyl-D-erythritol 2-phosphate = 2-C-methyl-D-erythritol 2,4-cyclic diphosphate + CMP. It functions in the pathway isoprenoid biosynthesis; isopentenyl diphosphate biosynthesis via DXP pathway; isopentenyl diphosphate from 1-deoxy-D-xylulose 5-phosphate: step 2/6. The protein operates within isoprenoid biosynthesis; isopentenyl diphosphate biosynthesis via DXP pathway; isopentenyl diphosphate from 1-deoxy-D-xylulose 5-phosphate: step 4/6. In terms of biological role, bifunctional enzyme that catalyzes the formation of 4-diphosphocytidyl-2-C-methyl-D-erythritol from CTP and 2-C-methyl-D-erythritol 4-phosphate (MEP) (IspD), and catalyzes the conversion of 4-diphosphocytidyl-2-C-methyl-D-erythritol 2-phosphate (CDP-ME2P) to 2-C-methyl-D-erythritol 2,4-cyclodiphosphate (ME-CPP) with a corresponding release of cytidine 5-monophosphate (CMP) (IspF). This Dinoroseobacter shibae (strain DSM 16493 / NCIMB 14021 / DFL 12) protein is Bifunctional enzyme IspD/IspF.